A 482-amino-acid chain; its full sequence is Glycogen synthase (482 aa).

Lysine 15 contacts ADP-alpha-D-glucose.

Belongs to the glycosyltransferase 1 family. Bacterial/plant glycogen synthase subfamily.

The catalysed reaction is [(1-&gt;4)-alpha-D-glucosyl](n) + ADP-alpha-D-glucose = [(1-&gt;4)-alpha-D-glucosyl](n+1) + ADP + H(+). The protein operates within glycan biosynthesis; glycogen biosynthesis. Its function is as follows. Synthesizes alpha-1,4-glucan chains using ADP-glucose. The protein is Glycogen synthase of Elusimicrobium minutum (strain Pei191).